The following is a 329-amino-acid chain: MILSIESSCDDSSIAITRIKDYKLLFHKKISQELAHSEYGGVVPELASRLHAEALPKILEEAKEFLPQIKAIAVTNEPGLSVTLLEGIMMAKALHLALNVPLIGVNHLIGHVYSLFIEKEAVLPKMVLLVSGGHTMILDVKGYKDIKVLATTLDDSFGESFDKVAKMMGLGYPGGPVIEKLAQKGDANRFDFPIPLKNAKELAFSYSGLKNAVRLALSEMENLSEQDMADIAASFQKAAIAHLLQKTKKACEIYKPSDFAIVGGASANMALRKAFEQECAKRAIPIAFAKLEYCSDNAAMIGRAAVEAFLMNDFTDMDALVAIPRSCFV.

Positions 107 and 111 each coordinate Fe cation. Residues 129–133, Asp162, Gly175, and Asn268 each bind substrate; that span reads LVSGG. Asp296 contributes to the Fe cation binding site.

This sequence belongs to the KAE1 / TsaD family. It depends on Fe(2+) as a cofactor.

The protein resides in the cytoplasm. The catalysed reaction is L-threonylcarbamoyladenylate + adenosine(37) in tRNA = N(6)-L-threonylcarbamoyladenosine(37) in tRNA + AMP + H(+). Its function is as follows. Required for the formation of a threonylcarbamoyl group on adenosine at position 37 (t(6)A37) in tRNAs that read codons beginning with adenine. Is involved in the transfer of the threonylcarbamoyl moiety of threonylcarbamoyl-AMP (TC-AMP) to the N6 group of A37, together with TsaE and TsaB. TsaD likely plays a direct catalytic role in this reaction. The protein is tRNA N6-adenosine threonylcarbamoyltransferase of Nitratiruptor sp. (strain SB155-2).